The following is a 459-amino-acid chain: tRNA(Ile)-lysidine synthase (459 aa).

Position 38 to 43 (38 to 43) interacts with ATP; sequence SGGMDS.

Belongs to the tRNA(Ile)-lysidine synthase family.

Its subcellular location is the cytoplasm. It catalyses the reaction cytidine(34) in tRNA(Ile2) + L-lysine + ATP = lysidine(34) in tRNA(Ile2) + AMP + diphosphate + H(+). In terms of biological role, ligates lysine onto the cytidine present at position 34 of the AUA codon-specific tRNA(Ile) that contains the anticodon CAU, in an ATP-dependent manner. Cytidine is converted to lysidine, thus changing the amino acid specificity of the tRNA from methionine to isoleucine. This Acinetobacter baylyi (strain ATCC 33305 / BD413 / ADP1) protein is tRNA(Ile)-lysidine synthase.